The sequence spans 81 residues: Acyl carrier protein (81 aa).

The 79-residue stretch at Ala-2–Gln-80 folds into the Carrier domain. The residue at position 40 (Ser-40) is an O-(pantetheine 4'-phosphoryl)serine.

Belongs to the acyl carrier protein (ACP) family. In terms of processing, 4'-phosphopantetheine is transferred from CoA to a specific serine of apo-ACP by AcpS. This modification is essential for activity because fatty acids are bound in thioester linkage to the sulfhydryl of the prosthetic group.

The protein localises to the cytoplasm. Its pathway is lipid metabolism; fatty acid biosynthesis. Carrier of the growing fatty acid chain in fatty acid biosynthesis. The chain is Acyl carrier protein from Paenarthrobacter aurescens (strain TC1).